Reading from the N-terminus, the 428-residue chain is Acylglycerol kinase, mitochondrial (428 aa).

The segment at 18-34 (STVGFCLLAYGSHWLYG) is hydrophobic. Positions 61 to 202 (SAIKKATVFL…LDVLQIKGEQ (142 aa)) constitute a DAGKc domain.

The protein belongs to the AGK family. As to quaternary structure, component of the TIM22 complex. Requires Mg(2+) as cofactor.

Its subcellular location is the mitochondrion inner membrane. It is found in the mitochondrion intermembrane space. It carries out the reaction a monoacylglycerol + ATP = a monoacyl-sn-glycero-3-phosphate + ADP + H(+). The enzyme catalyses a 1,2-diacyl-sn-glycerol + ATP = a 1,2-diacyl-sn-glycero-3-phosphate + ADP + H(+). It catalyses the reaction an N-acylsphing-4-enine + ATP = an N-acylsphing-4-enine 1-phosphate + ADP + H(+). The catalysed reaction is 1-(9Z-octadecenoyl)-sn-glycerol + ATP = 1-(9Z-octadecenoyl)-sn-glycero-3-phosphate + ADP + H(+). It carries out the reaction 1,2-di-(9Z-octadecenoyl)-sn-glycerol + ATP = 1,2-di-(9Z-octadecenoyl)-sn-glycero-3-phosphate + ADP + H(+). The enzyme catalyses a 1-acyl-sn-glycerol + ATP = a 1-acyl-sn-glycero-3-phosphate + ADP + H(+). It catalyses the reaction 1-hexadecanoyl-sn-glycerol + ATP = 1-hexadecanoyl-sn-glycero-3-phosphate + ADP + H(+). The catalysed reaction is a 2-acylglycerol + ATP = a 2-acyl-sn-glycerol 3-phosphate + ADP + H(+). It carries out the reaction 2-(5Z,8Z,11Z,14Z-eicosatetraenoyl)-glycerol + ATP = 2-(5Z,8Z,11Z,14Z-eicosatetraenoyl)-sn-glycero-3-phosphate + ADP + H(+). The enzyme catalyses 1-(5Z,8Z,11Z,14Z-eicosatetraenoyl)-sn-glycerol + ATP = 1-(5Z,8Z,11Z,14Z-eicosatetraenoyl)-sn-glycero-3-phosphate + ADP + H(+). It catalyses the reaction N-(hexanoyl)sphing-4-enine + ATP = N-hexanoylsphing-4-enine 1-phosphate + ADP + H(+). It functions in the pathway lipid metabolism; glycerolipid metabolism. Functionally, lipid kinase that can phosphorylate both monoacylglycerol and diacylglycerol to form lysophosphatidic acid (LPA) and phosphatidic acid (PA), respectively. Phosphorylates ceramide but not sphingosine. Phosphorylates 1,2-dioleoylglycerol more rapidly than 2,3-dioleoylglycerol. Independently of its lipid kinase activity, acts as a component of the TIM22 complex. The TIM22 complex mediates the import and insertion of multi-pass transmembrane proteins into the mitochondrial inner membrane by forming a twin-pore translocase that uses the membrane potential as the external driving force. The polypeptide is Acylglycerol kinase, mitochondrial (Xenopus laevis (African clawed frog)).